The following is a 248-amino-acid chain: Membrane-spanning 4-domains subfamily A member 6A (248 aa).

Residues 1-46 lie on the Cytoplasmic side of the membrane; sequence MTSQPVPNETIIVLPSNVINFSQAEKPEPTNQGQDSLKKHLHAEIK. The helical transmembrane segment at 47-67 threads the bilayer; that stretch reads VIGTIQILCGMMVLSLGIILA. At 68-84 the chain is on the extracellular side; that stretch reads SASFSPNFTQVTSTLLN. A helical membrane pass occupies residues 85–105; the sequence is SAYPFIGPFFFIISGSLSIAT. Residues 106-116 are Cytoplasmic-facing; that stretch reads EKRLTKLLVHS. A helical membrane pass occupies residues 117 to 137; sequence SLVGSILSALSALVGFIILSV. Residues 138-185 lie on the Extracellular side of the membrane; sequence KQATLNPASLQCELDKNNIPTRSYVSYFYHDSLYTTDCYTAKASLAGT. Residues 186–206 form a helical membrane-spanning segment; the sequence is LSLMLICTLLEFCLAVLTAVL. At 207–248 the chain is on the cytoplasmic side; that stretch reads RWKQAYSDFPGSVLFLPHSYIGNSGMSSKMTHDCGYEELLTS.

It belongs to the MS4A family. Variable expression in some B-cell, myelomonocytic, and erythroleukemia cell lines.

The protein resides in the membrane. Functionally, may be involved in signal transduction as a component of a multimeric receptor complex. This chain is Membrane-spanning 4-domains subfamily A member 6A (MS4A6A), found in Homo sapiens (Human).